The sequence spans 837 residues: Putative outer membrane protein assembly factor TP_0326 (837 aa).

An N-terminal signal peptide occupies residues 1 to 21; sequence MLKKASAFLIASCCVMSLAWA. Over 22–433 the chain is Periplasmic; it reads QANDNWYEGK…ILNVEEQSTA (412 aa). 5 POTRA domains span residues 31-105, 106-182, 185-273, 276-354, and 357-430; these read KPIS…VKER, PSVK…IQEG, TVVS…VVEG, YRYG…VVER, and SHVE…VEEQ. The beta stranded transmembrane segment at 434-442 threads the bilayer; sequence NVQFGVTFS. The Extracellular; loop L1 segment spans residues 443-450; that stretch reads GVGEAGTF. The chain crosses the membrane as a beta stranded span at residues 451-461; sequence PLSLFCQWEEK. The Periplasmic segment spans residues 462–468; sequence NFLGKGN. The chain crosses the membrane as a beta stranded span at residues 469 to 476; the sequence is EISVNATL. The Extracellular; loop L2 segment spans residues 477–478; sequence GS. A beta stranded transmembrane segment spans residues 479–489; the sequence is EAQSLKLGYVE. Over 490–499 the chain is Periplasmic; the sequence is RWFLGSPLTV. Residues 500-520 traverse the membrane as a beta stranded segment; sequence GFDFELTHKNLFVYRAGSYGN. At 521 to 530 the chain is on the extracellular; loop L3 side; it reads GLPHPYTSRE. A beta stranded membrane pass occupies residues 531–543; sequence QWASSPGLAESFR. Over 544–554 the chain is Periplasmic; that stretch reads LKYSRFESAIG. The beta stranded transmembrane segment at 555 to 568 threads the bilayer; it reads AHTGYQWYPRYAVI. The Extracellular; loop L4 portion of the chain corresponds to 569-601; that stretch reads RVNGGVDFRVVKNFYDKDNNQPFDLTVKEQLNW. A beta stranded membrane pass occupies residues 602-615; the sequence is TSINSFWTSVSFDG. The Periplasmic segment spans residues 616-623; that stretch reads RDFAYDPS. A beta stranded membrane pass occupies residues 624–636; the sequence is SGWFLGQRCTFNG. At 637-644 the chain is on the extracellular; loop L5 side; it reads LVPFLEKE. Residues 645–658 form a beta stranded membrane-spanning segment; the sequence is HSFRSDTKAEFYVT. The Periplasmic portion of the chain corresponds to 659 to 667; that stretch reads LLNYPVSAV. A beta stranded transmembrane segment spans residues 668–682; it reads WNLKFVLAFYTGVSV. The Extracellular; loop L6 portion of the chain corresponds to 683–724; that stretch reads QTYYGRRKSENGKGNGVRSGALVIDGVLVGRGWSEDAKKNTG. A beta stranded membrane pass occupies residues 725–736; it reads DLLLHHWIEFRW. The Periplasmic segment spans residues 737 to 741; the sequence is PLAHG. Residues 742 to 756 traverse the membrane as a beta stranded segment; the sequence is IVSFDFFFDAAMVYN. Over 757–786 the chain is Extracellular; loop L7; it reads IESQSPNGSSSASSSSSSSSSSSRTTSSEG. The segment at 761-785 is disordered; the sequence is SPNGSSSASSSSSSSSSSSRTTSSE. Residues 765–784 are compositionally biased toward low complexity; the sequence is SSSASSSSSSSSSSSRTTSS. A beta stranded transmembrane segment spans residues 787 to 799; sequence LYKMSYGPGLRFT. Over 800–802 the chain is Periplasmic; that stretch reads LPQ. The beta stranded transmembrane segment at 803-814 threads the bilayer; sequence FPLKLAFANTFT. Residues 815-824 are Extracellular; loop L8-facing; it reads SPGGIPKTKK. Residues 825-829 form a beta stranded membrane-spanning segment; sequence NWNFV. Residues 830 to 837 lie on the Periplasmic side of the membrane; the sequence is LSFTVNNL.

Belongs to the BamA family. Part of 2 complexes of about 239 and 164 kDa.

The protein localises to the cell outer membrane. Might be part of the outer membrane protein assembly complex, which is involved in assembly and insertion of beta-barrel proteins into the outer membrane. Its function is as follows. Both rabbit immune serum and rabbit antiserum specific for extracytoplasmic loop L4 promote bacteria internalization by rabbit peritoneal macrophages. Pools of human syphilitic sera from the USA and Columbia recognize both the N-terminal POTRA-containing and C-terminal beta-barrel domains as well as loop L4, showing this protein stimulates the immune system in both humans and rabbits. This Treponema pallidum (strain Nichols) protein is Putative outer membrane protein assembly factor TP_0326 (tp92).